A 305-amino-acid chain; its full sequence is Methionyl-tRNA formyltransferase (305 aa).

111–114 (SLLP) lines the (6S)-5,6,7,8-tetrahydrofolate pocket.

Belongs to the Fmt family.

It catalyses the reaction L-methionyl-tRNA(fMet) + (6R)-10-formyltetrahydrofolate = N-formyl-L-methionyl-tRNA(fMet) + (6S)-5,6,7,8-tetrahydrofolate + H(+). Its function is as follows. Attaches a formyl group to the free amino group of methionyl-tRNA(fMet). The formyl group appears to play a dual role in the initiator identity of N-formylmethionyl-tRNA by promoting its recognition by IF2 and preventing the misappropriation of this tRNA by the elongation apparatus. This chain is Methionyl-tRNA formyltransferase, found in Helicobacter pylori (strain J99 / ATCC 700824) (Campylobacter pylori J99).